Here is a 378-residue protein sequence, read N- to C-terminus: Erythronate-4-phosphate dehydrogenase (378 aa).

Substrate contacts are provided by S45 and T66. NAD(+) contacts are provided by D146 and T175. Residue R208 is part of the active site. D232 lines the NAD(+) pocket. Residue E237 is part of the active site. Residue H254 is the Proton donor of the active site. Position 257 (G257) interacts with NAD(+). Y258 contacts substrate.

This sequence belongs to the D-isomer specific 2-hydroxyacid dehydrogenase family. PdxB subfamily. Homodimer.

It localises to the cytoplasm. It carries out the reaction 4-phospho-D-erythronate + NAD(+) = (R)-3-hydroxy-2-oxo-4-phosphooxybutanoate + NADH + H(+). The protein operates within cofactor biosynthesis; pyridoxine 5'-phosphate biosynthesis; pyridoxine 5'-phosphate from D-erythrose 4-phosphate: step 2/5. Its function is as follows. Catalyzes the oxidation of erythronate-4-phosphate to 3-hydroxy-2-oxo-4-phosphonooxybutanoate. In Shigella dysenteriae serotype 1 (strain Sd197), this protein is Erythronate-4-phosphate dehydrogenase.